A 61-amino-acid chain; its full sequence is Probable tautomerase BH3814 (61 aa).

Proline 2 serves as the catalytic Proton acceptor; via imino nitrogen.

Belongs to the 4-oxalocrotonate tautomerase family.

The polypeptide is Probable tautomerase BH3814 (Halalkalibacterium halodurans (strain ATCC BAA-125 / DSM 18197 / FERM 7344 / JCM 9153 / C-125) (Bacillus halodurans)).